We begin with the raw amino-acid sequence, 901 residues long: Alanine--tRNA ligase (901 aa).

Residues His-581, His-585, Cys-684, and His-688 each contribute to the Zn(2+) site.

This sequence belongs to the class-II aminoacyl-tRNA synthetase family. The cofactor is Zn(2+).

Its subcellular location is the cytoplasm. The catalysed reaction is tRNA(Ala) + L-alanine + ATP = L-alanyl-tRNA(Ala) + AMP + diphosphate. In terms of biological role, catalyzes the attachment of alanine to tRNA(Ala) in a two-step reaction: alanine is first activated by ATP to form Ala-AMP and then transferred to the acceptor end of tRNA(Ala). Also edits incorrectly charged Ser-tRNA(Ala) and Gly-tRNA(Ala) via its editing domain. This chain is Alanine--tRNA ligase, found in Mycobacterium ulcerans (strain Agy99).